The following is a 303-amino-acid chain: MSIKDEKIAVLFGGVSQEREVSLNSGAAVTEALKSLGYNVEGIDTKDFPIEKLKEKGIQRVFNILHGGIGENGVLQGALEQMGIPYTGCGVMASAVTLDKFRTKLMWQAVGLPTADMVVVRRGEAVDSEQIIAKLGLPVFVKPSSEGSSVGVTKVKTVEQLLPAVEEALKFDSIVLVEAFLAGKEYSVPVLDGQVLPAVQIIPEGEFYDYHAKYISDNTQYLVPALSDDRQAEVAELVKAAYEVVGCRGWSRIDVMEDANGHFNLVEVNTCPGMTSHSIFPKSAATVGIPFEKLVERVLELSA.

In terms of domain architecture, ATP-grasp spans 104 to 300 (KLMWQAVGLP…FEKLVERVLE (197 aa)). Position 132–187 (132–187 (IAKLGLPVFVKPSSEGSSVGVTKVKTVEQLLPAVEEALKFDSIVLVEAFLAGKEYS)) interacts with ATP. Residues Asp254, Glu267, and Asn269 each contribute to the Mg(2+) site.

The protein belongs to the D-alanine--D-alanine ligase family. Mg(2+) serves as cofactor. Mn(2+) is required as a cofactor.

It localises to the cytoplasm. The enzyme catalyses 2 D-alanine + ATP = D-alanyl-D-alanine + ADP + phosphate + H(+). It participates in cell wall biogenesis; peptidoglycan biosynthesis. Its function is as follows. Cell wall formation. In Actinobacillus pleuropneumoniae serotype 5b (strain L20), this protein is D-alanine--D-alanine ligase.